A 298-amino-acid chain; its full sequence is Diphthine methyl ester synthase (298 aa).

Residues Leu-9, Asp-85, Gly-88, 113-114 (SV), Leu-164, Leu-222, and His-247 contribute to the S-adenosyl-L-methionine site.

The protein belongs to the diphthine synthase family.

The protein localises to the cytoplasm. It catalyses the reaction 2-[(3S)-amino-3-carboxypropyl]-L-histidyl-[translation elongation factor 2] + 4 S-adenosyl-L-methionine = diphthine methyl ester-[translation elongation factor 2] + 4 S-adenosyl-L-homocysteine + 3 H(+). It participates in protein modification; peptidyl-diphthamide biosynthesis. S-adenosyl-L-methionine-dependent methyltransferase that catalyzes four methylations of the modified target histidine residue in translation elongation factor 2 (EF-2), to form an intermediate called diphthine methyl ester. The four successive methylation reactions represent the second step of diphthamide biosynthesis. This Kluyveromyces lactis (strain ATCC 8585 / CBS 2359 / DSM 70799 / NBRC 1267 / NRRL Y-1140 / WM37) (Yeast) protein is Diphthine methyl ester synthase (DPH5).